Here is a 540-residue protein sequence, read N- to C-terminus: E3 ubiquitin-protein ligase rnf8-A (540 aa).

One can recognise an FHA domain in the interval 30–84 (VTLGRGLGVTYQLKPTLCPLMISRTHCLFKQNTGGEWTVTDNKSLNGVWRNKERL). Residues 128–205 (LIRPLPDKTK…SGTESRLNDS (78 aa)) are disordered. Composition is skewed to polar residues over residues 152 to 162 (ASGNEGPSNFS) and 179 to 200 (SSHT…GTES). An RING-type zinc finger spans residues 382–420 (CIICSEHFIEAVTLNCAHSFCSYCIKSWKKRKEECPICR). The disordered stretch occupies residues 517 to 540 (GTDELDSSDFESDDDEEEDSFLII). The span at 519 to 540 (DELDSSDFESDDDEEEDSFLII) shows a compositional bias: acidic residues.

Belongs to the RNF8 family. Homodimer. Forms a E2-E3 ubiquitin ligase complex composed of the rnf8 homodimer and a E2 heterodimer of ube2n and ube2v2.

The protein resides in the nucleus. The catalysed reaction is S-ubiquitinyl-[E2 ubiquitin-conjugating enzyme]-L-cysteine + [acceptor protein]-L-lysine = [E2 ubiquitin-conjugating enzyme]-L-cysteine + N(6)-ubiquitinyl-[acceptor protein]-L-lysine.. Its pathway is protein modification; protein ubiquitination. E3 ubiquitin-protein ligase that plays a key role in DNA damage signaling via 2 distinct roles: by mediating the 'Lys-63'-linked ubiquitination of histones H2A and H2AX and promoting the recruitment of DNA repair proteins at double-strand breaks (DSBs) sites, and by catalyzing 'Lys-48'-linked ubiquitination to remove target proteins from DNA damage sites. Following DNA DSBs, it is recruited to the sites of damage by ATM-phosphorylated mdc1 and catalyzes the 'Lys-63'-linked ubiquitination of histones H2A and H2AX, thereby promoting the formation of tp53bp1 and brca1 ionizing radiation-induced foci (IRIF). H2A ubiquitination also mediates the ATM-dependent transcriptional silencing at regions flanking DSBs in cis, a mechanism to avoid collision between transcription and repair intermediates. Also catalyzes the formation of 'Lys-48'-linked polyubiquitin chains, leading to degradation of substrate proteins. In addition to its function in damage signaling, also plays a role in higher-order chromatin structure by mediating extensive chromatin decondensation. The sequence is that of E3 ubiquitin-protein ligase rnf8-A from Xenopus laevis (African clawed frog).